The primary structure comprises 563 residues: BOS complex subunit NCLN (563 aa).

The signal sequence occupies residues 1–42; sequence MLEEAGEVLENMLKASCLPLGFIVFLPAVLLLVAPPLPAADA. Residues 43–522 are Lumenal-facing; the sequence is AHEFTVYRMQ…VMNAYRVKPA (480 aa). Asn241 and Asn428 each carry an N-linked (GlcNAc...) asparagine glycan. A helical transmembrane segment spans residues 523–543; that stretch reads IFDLLLAVCIGAYLGMAYTAV. Residues 544 to 563 are Cytoplasmic-facing; the sequence is QHFDLLYKTVQRLLVKAKTQ.

The protein belongs to the nicastrin family. In terms of assembly, component of the back of Sec61 (BOS) complex, composed of NCLN/Nicalin, NOMO1 and TMEM147. The BOS complex is part of the multi-pass translocon (MPT) complex, composed of three subcomplexes, the GEL complex (composed of RAB5IF/OPTI and TMCO1), the BOS complex (composed of NCLN/Nicalin, NOMO1 and TMEM147) and the PAT complex (composed of WDR83OS/Asterix and CCDC47). The MPT complex associates with the SEC61 complex.

Its subcellular location is the endoplasmic reticulum membrane. In terms of biological role, component of the multi-pass translocon (MPT) complex that mediates insertion of multi-pass membrane proteins into the lipid bilayer of membranes. The MPT complex takes over after the SEC61 complex: following membrane insertion of the first few transmembrane segments of proteins by the SEC61 complex, the MPT complex occludes the lateral gate of the SEC61 complex to promote insertion of subsequent transmembrane regions. May antagonize Nodal signaling and subsequent organization of axial structures during mesodermal patterning, via its interaction with NOMO. The chain is BOS complex subunit NCLN from Canis lupus familiaris (Dog).